We begin with the raw amino-acid sequence, 37 residues long: Large ribosomal subunit protein bL36c (37 aa).

It belongs to the bacterial ribosomal protein bL36 family.

The protein resides in the plastid. It is found in the chloroplast. The protein is Large ribosomal subunit protein bL36c of Angiopteris evecta (Mule's foot fern).